A 217-amino-acid chain; its full sequence is MELTQHEARVIGVLLEKELTTPEQYPLSLNSLTSGCNQKTSREPVLNLSESEVQNTLDSLAKKRLISEQSGFGSRVVKYKHRFCNTEFSDLQLNPAQLATICLLLLRGPQTPGELRTRSNRLHEFNDVREVEHALDELARRDSPLVALLAKQPGKREARYCQLFTTEELELTTNPILHKDAEPQTSSRAELEDRVSKLEVEVGELKALIQQFQNKSQ.

The protein belongs to the UPF0502 family.

The protein is UPF0502 protein swp_3027 of Shewanella piezotolerans (strain WP3 / JCM 13877).